A 284-amino-acid polypeptide reads, in one-letter code: 2,3,4,5-tetrahydropyridine-2,6-dicarboxylate N-succinyltransferase (284 aa).

The substrate site is built by R111 and D148.

Belongs to the transferase hexapeptide repeat family. As to quaternary structure, homotrimer.

Its subcellular location is the cytoplasm. The enzyme catalyses (S)-2,3,4,5-tetrahydrodipicolinate + succinyl-CoA + H2O = (S)-2-succinylamino-6-oxoheptanedioate + CoA. The protein operates within amino-acid biosynthesis; L-lysine biosynthesis via DAP pathway; LL-2,6-diaminopimelate from (S)-tetrahydrodipicolinate (succinylase route): step 1/3. This chain is 2,3,4,5-tetrahydropyridine-2,6-dicarboxylate N-succinyltransferase, found in Brucella anthropi (strain ATCC 49188 / DSM 6882 / CCUG 24695 / JCM 21032 / LMG 3331 / NBRC 15819 / NCTC 12168 / Alc 37) (Ochrobactrum anthropi).